A 159-amino-acid polypeptide reads, in one-letter code: Cytochrome c-type biogenesis protein CcmE (159 aa).

At 1–8 (MHPIRKKR) the chain is on the cytoplasmic side. A helical; Signal-anchor for type II membrane protein transmembrane segment spans residues 9 to 29 (LTIVLFLVAGIAIAVGLTTYA). Residues 30 to 159 (LRQNINLFYD…VEKAAETTAY (130 aa)) are Periplasmic-facing. Positions 124 and 128 each coordinate heme. Positions 135 to 159 (EALERSSKGQHKSADVEKAAETTAY) are disordered. Positions 136 to 159 (ALERSSKGQHKSADVEKAAETTAY) are enriched in basic and acidic residues.

This sequence belongs to the CcmE/CycJ family.

Its subcellular location is the cell inner membrane. In terms of biological role, heme chaperone required for the biogenesis of c-type cytochromes. Transiently binds heme delivered by CcmC and transfers the heme to apo-cytochromes in a process facilitated by CcmF and CcmH. The chain is Cytochrome c-type biogenesis protein CcmE from Marinobacter nauticus (strain ATCC 700491 / DSM 11845 / VT8) (Marinobacter aquaeolei).